Here is a 155-residue protein sequence, read N- to C-terminus: Ribosome maturation factor RimP (155 aa).

This sequence belongs to the RimP family.

The protein localises to the cytoplasm. Functionally, required for maturation of 30S ribosomal subunits. The polypeptide is Ribosome maturation factor RimP (Synechococcus sp. (strain CC9605)).